A 362-amino-acid chain; its full sequence is Peptide chain release factor 1 (362 aa).

An N5-methylglutamine modification is found at Gln236.

It belongs to the prokaryotic/mitochondrial release factor family. Methylated by PrmC. Methylation increases the termination efficiency of RF1.

It localises to the cytoplasm. Functionally, peptide chain release factor 1 directs the termination of translation in response to the peptide chain termination codons UAG and UAA. This Lactobacillus gasseri (strain ATCC 33323 / DSM 20243 / BCRC 14619 / CIP 102991 / JCM 1131 / KCTC 3163 / NCIMB 11718 / NCTC 13722 / AM63) protein is Peptide chain release factor 1.